Reading from the N-terminus, the 304-residue chain is MPKIHDSSCTSGLTPSQRSHVLAEALPWLLHYRDKIVVVKYGGNAMIDDELKRAFAADMVFLRAVGARPVVVHGGGPQINMMLDKVGLEGEFRGGFRVTSPEVMEYVRMVLFGKVGRELVGLINEHGPYAVGASGEDAGLFTAEKFQPEIEGELVDIGRVGSITDVDPTSLFDLIDAGRIPVVSTIAPDDDGLVYNINADTAAGALAGALDAERLVMLTNVPGLYTDWPNKDSLVSSLTPAELEELLPTLDSGMIPKMTACLDAIHNGVKAAHVIDGRVPHSVLLELMTEGGIGTMISSESYEH.

Substrate-binding positions include 75-76 (GG), arginine 97, and asparagine 196.

This sequence belongs to the acetylglutamate kinase family. ArgB subfamily.

It is found in the cytoplasm. It carries out the reaction N-acetyl-L-glutamate + ATP = N-acetyl-L-glutamyl 5-phosphate + ADP. It functions in the pathway amino-acid biosynthesis; L-arginine biosynthesis; N(2)-acetyl-L-ornithine from L-glutamate: step 2/4. Functionally, catalyzes the ATP-dependent phosphorylation of N-acetyl-L-glutamate. In Corynebacterium urealyticum (strain ATCC 43042 / DSM 7109), this protein is Acetylglutamate kinase.